Reading from the N-terminus, the 319-residue chain is NAP1-binding protein (319 aa).

Positions 34–43 (SALRSRRKQM) are enriched in basic residues. The disordered stretch occupies residues 34 to 74 (SALRSRRKQMRPTGKSVLKRPRKVTDRKTEEKIRTNRRKTP). Residues 56-67 (KVTDRKTEEKIR) are compositionally biased toward basic and acidic residues. Phosphoserine occurs at positions 251 and 260. The segment at 278–319 (EMQPLQENISPACPTPPYRSRETEKEDETLSPISVDFSSYLS) is disordered.

In terms of assembly, interacts with NDC1 and MPS2.

The protein is NAP1-binding protein (NBP1) of Saccharomyces cerevisiae (strain ATCC 204508 / S288c) (Baker's yeast).